We begin with the raw amino-acid sequence, 488 residues long: Fumarate hydratase, mitochondrial (488 aa).

The transit peptide at M1–M24 directs the protein to the mitochondrion. Residues S124–T126, H154–N157, S164–N166, and T212 each bind substrate. H213 (proton donor/acceptor) is an active-site residue. The active site involves S343. Residues S344 and K349–N351 contribute to the substrate site. At T428 the chain carries Phosphothreonine.

It belongs to the class-II fumarase/aspartase family. Fumarase subfamily. In terms of assembly, homotetramer.

It localises to the mitochondrion matrix. The protein resides in the cytoplasm. It is found in the nucleus. The enzyme catalyses (S)-malate = fumarate + H2O. The protein operates within carbohydrate metabolism; tricarboxylic acid cycle; (S)-malate from fumarate: step 1/1. Functionally, catalyzes the reversible stereospecific interconversion of fumarate to L-malate. In mitochondrion, catalyzes the hydration of fumarate to L-malate in the tricarboxylic acid (TCA) cycle to facilitate a transition step in the production of energy in the form of NADH. In cytoplasm and nucleus, involved in DNA repair in response to DNA damage: following DNA double-strand breaks (DSBs), translocates from the cytosol to the nucleus and promotes DNA repair by catalyzing the dehydration of L-malate to fumarate. This is Fumarate hydratase, mitochondrial from Saccharomyces cerevisiae (strain ATCC 204508 / S288c) (Baker's yeast).